We begin with the raw amino-acid sequence, 175 residues long: Peptide deformylase (175 aa).

Residues C96 and H138 each contribute to the Fe cation site. Residue E139 is part of the active site. A Fe cation-binding site is contributed by H142.

This sequence belongs to the polypeptide deformylase family. It depends on Fe(2+) as a cofactor.

It carries out the reaction N-terminal N-formyl-L-methionyl-[peptide] + H2O = N-terminal L-methionyl-[peptide] + formate. Its function is as follows. Removes the formyl group from the N-terminal Met of newly synthesized proteins. Requires at least a dipeptide for an efficient rate of reaction. N-terminal L-methionine is a prerequisite for activity but the enzyme has broad specificity at other positions. The sequence is that of Peptide deformylase from Rhodopseudomonas palustris (strain BisB5).